The sequence spans 63 residues: Megourin-3 (63 aa).

In terms of assembly, monomer. In terms of processing, contains four disulfide bonds.

The protein resides in the secreted. In terms of biological role, has antimicrobial activity against Gram-positive bacteria and fungi. This is Megourin-3 from Megoura viciae (Vetch aphid).